The sequence spans 712 residues: Ribosomal RNA large subunit methyltransferase K/L (712 aa).

The THUMP domain occupies 46 to 157 (GAYQALLHSR…RENMVVSLDL (112 aa)).

Belongs to the methyltransferase superfamily. RlmKL family.

It is found in the cytoplasm. The catalysed reaction is guanosine(2445) in 23S rRNA + S-adenosyl-L-methionine = N(2)-methylguanosine(2445) in 23S rRNA + S-adenosyl-L-homocysteine + H(+). The enzyme catalyses guanosine(2069) in 23S rRNA + S-adenosyl-L-methionine = N(2)-methylguanosine(2069) in 23S rRNA + S-adenosyl-L-homocysteine + H(+). Its function is as follows. Specifically methylates the guanine in position 2445 (m2G2445) and the guanine in position 2069 (m7G2069) of 23S rRNA. This Actinobacillus pleuropneumoniae serotype 5b (strain L20) protein is Ribosomal RNA large subunit methyltransferase K/L.